The primary structure comprises 131 residues: Thioredoxin H4-1 (131 aa).

One can recognise a Thioredoxin domain in the interval Ser-3–Asp-129. Active-site nucleophile residues include Cys-55 and Cys-58. The cysteines at positions 55 and 58 are disulfide-linked.

It belongs to the thioredoxin family. Plant H-type subfamily.

It localises to the cytoplasm. In terms of biological role, probable thiol-disulfide oxidoreductase that may be involved in the redox regulation of a number of cytosolic enzymes. This chain is Thioredoxin H4-1, found in Oryza sativa subsp. japonica (Rice).